Reading from the N-terminus, the 280-residue chain is Energy-coupling factor transporter ATP-binding protein EcfA1 (280 aa).

The 236-residue stretch at 6–241 (LRTENISFQY…SHMLQEIGLD (236 aa)) folds into the ABC transporter domain. 40 to 47 (GQNGSGKS) contributes to the ATP binding site.

This sequence belongs to the ABC transporter superfamily. Energy-coupling factor EcfA family. In terms of assembly, forms a stable energy-coupling factor (ECF) transporter complex composed of 2 membrane-embedded substrate-binding proteins (S component), 2 ATP-binding proteins (A component) and 2 transmembrane proteins (T component).

Its subcellular location is the cell membrane. Its function is as follows. ATP-binding (A) component of a common energy-coupling factor (ECF) ABC-transporter complex. Unlike classic ABC transporters this ECF transporter provides the energy necessary to transport a number of different substrates. This is Energy-coupling factor transporter ATP-binding protein EcfA1 from Bacillus cereus (strain ZK / E33L).